The chain runs to 346 residues: Methylthioribose-1-phosphate isomerase (346 aa).

Residues 46–48 (RGA), arginine 89, and glutamine 196 contribute to the substrate site. The Proton donor role is filled by aspartate 237. Residue 247 to 248 (NK) coordinates substrate.

It belongs to the eIF-2B alpha/beta/delta subunits family. MtnA subfamily.

It carries out the reaction 5-(methylsulfanyl)-alpha-D-ribose 1-phosphate = 5-(methylsulfanyl)-D-ribulose 1-phosphate. The protein operates within amino-acid biosynthesis; L-methionine biosynthesis via salvage pathway; L-methionine from S-methyl-5-thio-alpha-D-ribose 1-phosphate: step 1/6. Its function is as follows. Catalyzes the interconversion of methylthioribose-1-phosphate (MTR-1-P) into methylthioribulose-1-phosphate (MTRu-1-P). The polypeptide is Methylthioribose-1-phosphate isomerase (Geobacter sp. (strain M21)).